The chain runs to 175 residues: Shikimate kinase (175 aa).

Position 17–22 (17–22) interacts with ATP; it reads GAGKST. S21 is a binding site for Mg(2+). D39, R63, and G85 together coordinate substrate. R123 lines the ATP pocket. R142 is a substrate binding site. ATP is bound at residue Q159.

The protein belongs to the shikimate kinase family. Monomer. Mg(2+) is required as a cofactor.

It is found in the cytoplasm. It catalyses the reaction shikimate + ATP = 3-phosphoshikimate + ADP + H(+). It functions in the pathway metabolic intermediate biosynthesis; chorismate biosynthesis; chorismate from D-erythrose 4-phosphate and phosphoenolpyruvate: step 5/7. Its function is as follows. Catalyzes the specific phosphorylation of the 3-hydroxyl group of shikimic acid using ATP as a cosubstrate. This is Shikimate kinase from Photobacterium profundum (strain SS9).